The sequence spans 276 residues: Large ribosomal subunit protein uL2 (276 aa).

Disordered stretches follow at residues M1–D20 and T219–K276. Residues N7–D20 are compositionally biased toward polar residues.

The protein belongs to the universal ribosomal protein uL2 family. Part of the 50S ribosomal subunit. Forms a bridge to the 30S subunit in the 70S ribosome.

Functionally, one of the primary rRNA binding proteins. Required for association of the 30S and 50S subunits to form the 70S ribosome, for tRNA binding and peptide bond formation. It has been suggested to have peptidyltransferase activity; this is somewhat controversial. Makes several contacts with the 16S rRNA in the 70S ribosome. This Bacillus cereus (strain Q1) protein is Large ribosomal subunit protein uL2.